A 115-amino-acid polypeptide reads, in one-letter code: Rubredoxin (115 aa).

The 52-residue stretch at 15–66 folds into the Rubredoxin-like domain; the sequence is SPNHECRACGYVYIPSQGDQKTSVSPGTPFEALPLNWKCPVCGAPRNYFIST. Cys20, Cys23, Cys53, and Cys56 together coordinate Fe cation.

This sequence belongs to the rubredoxin family. Fe(3+) serves as cofactor.

In terms of biological role, rubredoxin is a small nonheme, iron protein lacking acid-labile sulfide. Its single Fe, chelated to 4 Cys, functions as an electron acceptor and may also stabilize the conformation of the molecule. Could be involved in hydrogenase-linked redox processes. The chain is Rubredoxin (rub) from Synechocystis sp. (strain ATCC 27184 / PCC 6803 / Kazusa).